Reading from the N-terminus, the 355-residue chain is N-acetyl-gamma-glutamyl-phosphate reductase (355 aa).

Cysteine 152 is a catalytic residue.

It belongs to the NAGSA dehydrogenase family. Type 1 subfamily.

Its subcellular location is the cytoplasm. It catalyses the reaction N-acetyl-L-glutamate 5-semialdehyde + phosphate + NADP(+) = N-acetyl-L-glutamyl 5-phosphate + NADPH + H(+). It participates in amino-acid biosynthesis; L-arginine biosynthesis; N(2)-acetyl-L-ornithine from L-glutamate: step 3/4. Its function is as follows. Catalyzes the NADPH-dependent reduction of N-acetyl-5-glutamyl phosphate to yield N-acetyl-L-glutamate 5-semialdehyde. This chain is N-acetyl-gamma-glutamyl-phosphate reductase, found in Psychrobacter arcticus (strain DSM 17307 / VKM B-2377 / 273-4).